The primary structure comprises 570 residues: MDFNPVPPPRETLRAYLSKKGHVVKNWKLRLFVLKPGSSYMEYFVDETKEQQHLPQGRVPLYGTRVMEYVYNSNNNPREFCLSVETENKNWIISTGSKAQQLEWIEAIKHAIESAVETDEIKLQKHKSIEKQLQLDGKNKNKIPVLKLLLLGTGESGKSTVVKQMKILHHKGFSKEEEEFYRNLIYINLLDGMALLIHVIKENNIEIPQETLSAIKNYSSWYRVYIEKRNKNGIRNNPIGSMIPISILNNNKDNNNSNSSSLKNNSGGSSSSELDKKMTHLSLDGSTCINSNSASPNGPSSSTTTSTINTHNRSNSDGSSNNIFNVQDFGIPPIITNYISTIWSDPVVQSEVMLQAQKYHINESTQYYLNEIKRIGKPTYQPVNLDILKSRATTNGVVETDFNVNGEVIFRIVDVAGQRGERKKWINFFDDVTAIVFVAAINEYDQKLVEDNCTNRLHESLNLFDSICNDSTFPKTSIILFLNKIDLFREKLKRTSINICFPDYNGDQSYEKSSNYIKNNFLSKKKGGNGINSQNFIYFHFTCATDTKSFETVFNSVRDIIISKTLEFYC.

The 104-residue stretch at R10 to E113 folds into the PH domain. The region spanning P144–C570 is the G-alpha domain. The G1 motif stretch occupies residues K147–T160. A GTP-binding site is contributed by G152–S159. Residue S159 coordinates Mg(2+). Composition is skewed to low complexity over residues N254–S272 and N290–S316. Residues N254–N321 are disordered. The tract at residues D386–T394 is G2 motif. GTP-binding positions include L388 to T394, D414 to Q418, N483 to D486, and A544. Mg(2+) is bound at residue T394. The tract at residues F410 to R419 is G3 motif. The segment at I479–D486 is G4 motif. A G5 motif region spans residues T542–T547.

Belongs to the G-alpha family. As to quaternary structure, g proteins are composed of 3 units; alpha, beta and gamma. The alpha chain contains the guanine nucleotide binding site.

In terms of biological role, guanine nucleotide-binding proteins (G proteins) are involved as modulators or transducers in various transmembrane signaling systems. G alpha-3 plays a role in development. G alpha-3 mutants fail to aggregate. This is Guanine nucleotide-binding protein alpha-3 subunit (gpaC) from Dictyostelium discoideum (Social amoeba).